Here is a 282-residue protein sequence, read N- to C-terminus: Ermin (282 aa).

2 stretches are compositionally biased toward polar residues: residues 1 to 12 (MTDTPVTLSGSE) and 21 to 30 (NGQQPSSQTR). The segment at 1–71 (MTDTPVTLSG…NSKGNVLPRG (71 aa)) is disordered. Phosphoserine occurs at positions 72, 212, 224, 228, and 231. The span at 212-224 (SPLKEESLAREDS) shows a compositional bias: basic and acidic residues. The disordered stretch occupies residues 212–246 (SPLKEESLAREDSPLSSPSSQPGTPDEQLVLGKKG). The segment covering 225–234 (PLSSPSSQPG) has biased composition (polar residues). Thr235 is modified (phosphothreonine). The interval 263-282 (KIRKGNTKQRIDEFESMMHL) is binds actin.

In terms of assembly, binds actin. Expressed specifically by the oligodendrocytes. Highest expression seen in the spinal cord followed by brainstem, cerebellum, thalamus, and hypothalamus. In the myelin sheath, found mainly in the abaxon and the lateral few terminal loops. Its apposition to the myelinated axon, through the latter, defines an axonal subregion, termed juxtanode, at the Ranvier node-paranode junction.

It is found in the cytoplasm. The protein localises to the cytoskeleton. In terms of biological role, plays a role in cytoskeletal rearrangements during the late wrapping and/or compaction phases of myelinogenesis as well as in maintenance and stability of myelin sheath in the adult. May play an important role in late-stage oligodendroglia maturation, myelin/Ranvier node formation during CNS development, and in the maintenance and plasticity of related structures in the mature CNS. This chain is Ermin (Ermn), found in Rattus norvegicus (Rat).